The sequence spans 479 residues: Bifunctional protein HldE (479 aa).

Positions 1-322 are ribokinase; the sequence is MIDDFRFGRI…RELLQEMPET (322 aa). 198–201 serves as a coordination point for ATP; it reads NRIE. Residue D267 is part of the active site. The cytidylyltransferase stretch occupies residues 347–479; it reads FTNGCFDLVH…LVRGMQSAPS (133 aa).

In the N-terminal section; belongs to the carbohydrate kinase PfkB family. The protein in the C-terminal section; belongs to the cytidylyltransferase family. In terms of assembly, homodimer.

It catalyses the reaction D-glycero-beta-D-manno-heptose 7-phosphate + ATP = D-glycero-beta-D-manno-heptose 1,7-bisphosphate + ADP + H(+). The enzyme catalyses D-glycero-beta-D-manno-heptose 1-phosphate + ATP + H(+) = ADP-D-glycero-beta-D-manno-heptose + diphosphate. It functions in the pathway nucleotide-sugar biosynthesis; ADP-L-glycero-beta-D-manno-heptose biosynthesis; ADP-L-glycero-beta-D-manno-heptose from D-glycero-beta-D-manno-heptose 7-phosphate: step 1/4. Its pathway is nucleotide-sugar biosynthesis; ADP-L-glycero-beta-D-manno-heptose biosynthesis; ADP-L-glycero-beta-D-manno-heptose from D-glycero-beta-D-manno-heptose 7-phosphate: step 3/4. Its function is as follows. Catalyzes the phosphorylation of D-glycero-D-manno-heptose 7-phosphate at the C-1 position to selectively form D-glycero-beta-D-manno-heptose-1,7-bisphosphate. Functionally, catalyzes the ADP transfer from ATP to D-glycero-beta-D-manno-heptose 1-phosphate, yielding ADP-D-glycero-beta-D-manno-heptose. The polypeptide is Bifunctional protein HldE (Gluconobacter oxydans (strain 621H) (Gluconobacter suboxydans)).